We begin with the raw amino-acid sequence, 1160 residues long: ATP-dependent RNA helicase dhx8 (1160 aa).

2 disordered regions span residues 75–140 and 153–192; these read TTTT…SIPN and PIDD…QNKR. Composition is skewed to low complexity over residues 76–110 and 122–132; these read TTTT…NNNN and NSNSNNQKKNQ. Residues 155 to 192 show a composition bias toward basic and acidic residues; the sequence is DDEKTKEELKRKQQDMDREFEREQREKRDRDREQQNKR. Residues 202 to 274 form the S1 motif domain; that stretch reads YKIYDGKVSS…ASSKISLSMK (73 aa). Positions 294 to 320 are enriched in low complexity; the sequence is ISTNSTNNRSNPFKPNNNNNNSSNNNN. Disordered stretches follow at residues 294-334 and 409-438; these read ISTN…KNRK and KPNG…QRNE. Polar residues predominate over residues 412–424; that stretch reads GSLQRAASTQTAL. Residues 425 to 438 show a composition bias toward basic and acidic residues; it reads SKERKEEKNQQRNE. The 164-residue stretch at 518-681 folds into the Helicase ATP-binding domain; the sequence is LQAVSEHQLL…FMNAQLFIIP (164 aa). ATP is bound at residue 531–538; sequence GETGSGKT. The DEAH box signature appears at 628-631; the sequence is DEAH. The Helicase C-terminal domain occupies 699-879; sequence YLDASLITVM…NTVLTMKAMG (181 aa).

The protein belongs to the DEAD box helicase family. DEAH subfamily. DDX8/PRP22 sub-subfamily. As to quaternary structure, identified in the spliceosome complex.

The protein localises to the nucleus. The enzyme catalyses ATP + H2O = ADP + phosphate + H(+). In terms of biological role, facilitates nuclear export of spliced mRNA by releasing the RNA from the spliceosome. This Dictyostelium discoideum (Social amoeba) protein is ATP-dependent RNA helicase dhx8 (dhx8).